Here is an 868-residue protein sequence, read N- to C-terminus: Leucine--tRNA ligase (868 aa).

The 'HIGH' region motif lies at Pro-42–His-52. Positions Lys-627 to Ser-631 match the 'KMSKS' region motif. Lys-630 serves as a coordination point for ATP.

The protein belongs to the class-I aminoacyl-tRNA synthetase family.

It localises to the cytoplasm. The enzyme catalyses tRNA(Leu) + L-leucine + ATP = L-leucyl-tRNA(Leu) + AMP + diphosphate. The chain is Leucine--tRNA ligase from Pseudomonas savastanoi pv. phaseolicola (strain 1448A / Race 6) (Pseudomonas syringae pv. phaseolicola (strain 1448A / Race 6)).